The sequence spans 198 residues: V-type proton ATPase subunit E (198 aa).

It belongs to the V-ATPase E subunit family.

Functionally, produces ATP from ADP in the presence of a proton gradient across the membrane. This Borrelia turicatae (strain 91E135) protein is V-type proton ATPase subunit E.